A 91-amino-acid chain; its full sequence is Heat shock protein 30E (91 aa).

The segment at 62–91 (RDQIRQPGAPESEGTSPNTGKDGKDPGNSL) is disordered. A compositionally biased stretch (basic and acidic residues) spans 82-91 (KDGKDPGNSL).

Belongs to the small heat shock protein (HSP20) family.

The sequence is that of Heat shock protein 30E (hsp30e) from Xenopus laevis (African clawed frog).